We begin with the raw amino-acid sequence, 49 residues long: Large ribosomal subunit protein bL33B (49 aa).

This sequence belongs to the bacterial ribosomal protein bL33 family.

The chain is Large ribosomal subunit protein bL33B (rpmG2) from Lactococcus lactis subsp. cremoris (Streptococcus cremoris).